Here is an 889-residue protein sequence, read N- to C-terminus: Inter-alpha-trypsin inhibitor heavy chain H3 (889 aa).

The first 21 residues, 1-21 (MRTMWWPCLVLALLSGLETSG), serve as a signal peptide directing secretion. Residues 22–33 (FPRSPLQLLGKR) constitute a propeptide that is removed on maturation. The region spanning 29–158 (LLGKRSLPEG…KVTFELTYEE (130 aa)) is the VIT domain. Residue N91 is glycosylated (N-linked (GlcNAc...) asparagine). Residues 284-467 (NIVFVIDVSG…LQLQGFYEEV (184 aa)) enclose the VWFA domain. The N-linked (GlcNAc...) asparagine glycan is linked to N580. An Aspartate 1-(chondroitin 4-sulfate)-ester modification is found at D649. Positions 650–889 (PHFIIQIPGK…HTDYIVPSLF (240 aa)) are excised as a propeptide.

The protein belongs to the ITIH family. In terms of assembly, I-alpha-I plasma protease inhibitors are assembled from one or two heavy chains (HC) and one light chain, bikunin. Pre-alpha-inhibitor (P-alpha-I) is composed of ITIH3/HC3 and bikunin. Heavy chains are linked to bikunin via chondroitin 4-sulfate esterified to the alpha-carboxyl of the C-terminal aspartate after propeptide cleavage. Expressed in both liver and brain.

Its subcellular location is the secreted. Its function is as follows. May act as a carrier of hyaluronan in serum or as a binding protein between hyaluronan and other matrix protein, including those on cell surfaces in tissues to regulate the localization, synthesis and degradation of hyaluronan which are essential to cells undergoing biological processes. The chain is Inter-alpha-trypsin inhibitor heavy chain H3 (Itih3) from Mus musculus (Mouse).